The primary structure comprises 271 residues: uncharacterized protein (271 aa).

This is an uncharacterized protein from Mycobacterium tuberculosis (strain CDC 1551 / Oshkosh).